Consider the following 303-residue polypeptide: Coenzyme PQQ synthesis protein B (303 aa).

It belongs to the PqqB family.

Its pathway is cofactor biosynthesis; pyrroloquinoline quinone biosynthesis. In terms of biological role, may be involved in the transport of PQQ or its precursor to the periplasm. The chain is Coenzyme PQQ synthesis protein B from Pseudomonas fluorescens (strain Pf0-1).